A 391-amino-acid chain; its full sequence is Formate-dependent phosphoribosylglycinamide formyltransferase (391 aa).

N(1)-(5-phospho-beta-D-ribosyl)glycinamide is bound by residues 18–19 (EL) and E78. Residues R110, K151, 156-161 (SSGKGQ), 191-194 (EEFI), and E199 contribute to the ATP site. Positions 115-305 (DLASKDLKIK…EFELHLRAFL (191 aa)) constitute an ATP-grasp domain. Mg(2+) is bound by residues E264 and E276. N(1)-(5-phospho-beta-D-ribosyl)glycinamide is bound by residues D283, K353, and 360–361 (RR).

It belongs to the PurK/PurT family. As to quaternary structure, homodimer.

The catalysed reaction is N(1)-(5-phospho-beta-D-ribosyl)glycinamide + formate + ATP = N(2)-formyl-N(1)-(5-phospho-beta-D-ribosyl)glycinamide + ADP + phosphate + H(+). Its pathway is purine metabolism; IMP biosynthesis via de novo pathway; N(2)-formyl-N(1)-(5-phospho-D-ribosyl)glycinamide from N(1)-(5-phospho-D-ribosyl)glycinamide (formate route): step 1/1. In terms of biological role, involved in the de novo purine biosynthesis. Catalyzes the transfer of formate to 5-phospho-ribosyl-glycinamide (GAR), producing 5-phospho-ribosyl-N-formylglycinamide (FGAR). Formate is provided by PurU via hydrolysis of 10-formyl-tetrahydrofolate. The protein is Formate-dependent phosphoribosylglycinamide formyltransferase of Prochlorococcus marinus (strain MIT 9301).